The chain runs to 295 residues: Nucleotide-binding protein EF_0766 (295 aa).

12–19 (GMSGAGKT) lines the ATP pocket. Residue 62 to 65 (DLRS) participates in GTP binding.

The protein belongs to the RapZ-like family.

Its function is as follows. Displays ATPase and GTPase activities. This chain is Nucleotide-binding protein EF_0766, found in Enterococcus faecalis (strain ATCC 700802 / V583).